We begin with the raw amino-acid sequence, 90 residues long: Protein LIM1 (90 aa).

Residues 1–26 (MASMKSLATAILVVLLLAALSREGRS) form the signal peptide. 4 cysteine pairs are disulfide-bonded: Cys29–Cys66, Cys39–Cys55, Cys56–Cys81, and Cys68–Cys88.

This sequence belongs to the A9/FIL1 family.

It localises to the secreted. The polypeptide is Protein LIM1 (LIM1) (Lilium longiflorum (Trumpet lily)).